A 339-amino-acid polypeptide reads, in one-letter code: Ketol-acid reductoisomerase (NADP(+)) (339 aa).

The 182-residue stretch at Met1–Thr182 folds into the KARI N-terminal Rossmann domain. NADP(+)-binding positions include Tyr24 to Gln27, Arg48, Ser51, Thr53, and Asp83 to Gln86. The active site involves His108. NADP(+) is bound at residue Gly134. Positions Thr183–Ile328 constitute a KARI C-terminal knotted domain. Asp191, Glu195, Glu227, and Glu231 together coordinate Mg(2+). Ser252 provides a ligand contact to substrate.

Belongs to the ketol-acid reductoisomerase family. The cofactor is Mg(2+).

The enzyme catalyses (2R)-2,3-dihydroxy-3-methylbutanoate + NADP(+) = (2S)-2-acetolactate + NADPH + H(+). It carries out the reaction (2R,3R)-2,3-dihydroxy-3-methylpentanoate + NADP(+) = (S)-2-ethyl-2-hydroxy-3-oxobutanoate + NADPH + H(+). It participates in amino-acid biosynthesis; L-isoleucine biosynthesis; L-isoleucine from 2-oxobutanoate: step 2/4. The protein operates within amino-acid biosynthesis; L-valine biosynthesis; L-valine from pyruvate: step 2/4. Functionally, involved in the biosynthesis of branched-chain amino acids (BCAA). Catalyzes an alkyl-migration followed by a ketol-acid reduction of (S)-2-acetolactate (S2AL) to yield (R)-2,3-dihydroxy-isovalerate. In the isomerase reaction, S2AL is rearranged via a Mg-dependent methyl migration to produce 3-hydroxy-3-methyl-2-ketobutyrate (HMKB). In the reductase reaction, this 2-ketoacid undergoes a metal-dependent reduction by NADPH to yield (R)-2,3-dihydroxy-isovalerate. This Parvibaculum lavamentivorans (strain DS-1 / DSM 13023 / NCIMB 13966) protein is Ketol-acid reductoisomerase (NADP(+)).